A 317-amino-acid polypeptide reads, in one-letter code: Tricarboxylate transport protein B, mitochondrial (317 aa).

The propeptide at 1–20 (MSGSPKFVSPFHRPHCLSAA) is removed in mature form. Solcar repeat units follow at residues 29 to 117 (THPG…LSNQ), 128 to 214 (TRGL…LRNW), and 224 to 309 (INPV…VVKV). The next 4 membrane-spanning stretches (helical) occupy residues 35–55 (ILAG…TEYV), 130–150 (GLIC…CPME), 223–243 (SINP…SVFG), and 294–314 (MDVA…NKVW).

This sequence belongs to the mitochondrial carrier (TC 2.A.29) family. Post-translationally, possesses a short cleavable presequence, which, however, is found to be dispensable both for targeting to mitochondria and insertion into the inner membrane. However, the presequence is required to keep SLC25A1 in a soluble state and thus in an import-competent state. Mature SLC25A1 lacking the presequence is prone to aggregation.

It is found in the mitochondrion inner membrane. The enzyme catalyses (S)-malate(in) + citrate(out) = (S)-malate(out) + citrate(in). It carries out the reaction D-threo-isocitrate(in) + citrate(out) = D-threo-isocitrate(out) + citrate(in). It catalyses the reaction citrate(out) + succinate(in) = citrate(in) + succinate(out). The catalysed reaction is cis-aconitate(in) + citrate(out) = cis-aconitate(out) + citrate(in). The enzyme catalyses trans-aconitate(in) + citrate(out) = trans-aconitate(out) + citrate(in). It carries out the reaction phosphoenolpyruvate(in) + citrate(out) = phosphoenolpyruvate(out) + citrate(in). It catalyses the reaction maleate(in) + citrate(out) = maleate(out) + citrate(in). Mitochondrial electroneutral antiporter that exports citrate from the mitochondria into the cytosol in exchange for malate. Also able to mediate the exchange of citrate for isocitrate, phosphoenolpyruvate, cis-aconitate and to a lesser extent trans-aconitate, maleate and succinate. In the cytoplasm, citrate plays important roles in fatty acid and sterol synthesis, regulation of glycolysis, protein acetylation, and other physiopathological processes. This Danio rerio (Zebrafish) protein is Tricarboxylate transport protein B, mitochondrial.